Consider the following 344-residue polypeptide: Nuclear distribution protein nudE homolog 1 (344 aa).

The segment at 1-93 (MEDSGKTFGS…MQHSEGYRQI (93 aa)) is self-association. A coiled-coil region spans residues 18–188 (WRDLAMTYKQ…ELAVQQKQDK (171 aa)). Positions 30–47 (ENTQEELREFQEGSREYE) are enriched in basic and acidic residues. The tract at residues 30-65 (ENTQEELREFQEGSREYEAELETQLQQAETRNRDLL) is disordered. The tract at residues 88–156 (EGYRQISALE…ERNAFLESEL (69 aa)) is interaction with PAFAH1B1. Positions 167–290 (QRLKDEARDL…QSPSRKSGPA (124 aa)) are interaction with CENPF. Residues 181 to 243 (AVQQKQDKPR…CGLGSPSSGT (63 aa)) are disordered. Residues 208 to 230 (ATGSAPSTPITHQGSSSGLNTPE) are compositionally biased toward polar residues. Ser-211 carries the phosphoserine modification. 4 positions are modified to phosphothreonine: Thr-215, Thr-228, Thr-243, and Thr-246. Cys-274 is lipidated: S-palmitoyl cysteine; by ZDHHC2, ZDHHC3 and ZDHHC7. The tract at residues 279–337 (YDQSPSRKSGPALGRGTKNRDGIDRRPGSTAVGDKGSGKRLEFAKPSSQLSSPALPSTQ) is disordered. Ser-282 carries the post-translational modification Phosphoserine. Basic and acidic residues predominate over residues 296–305 (KNRDGIDRRP). Over residues 324–335 (PSSQLSSPALPS) the composition is skewed to low complexity.

This sequence belongs to the nudE family. As to quaternary structure, homodimer. Interacts with CNTRL, LIS1, dynein, SLMAP and TCP1. Interacts with CENPF, dynactin, tubulin gamma, PAFAH1B1, PCM1 and PCNT. Interacts with ZNF365. Interacts with GTP-bound RAB9A and RAB9B; the interaction leads to RAB9-dynein motor tethering. Interacts (via C-terminus) with MCRS1 (via C-terminus); phosphorylation of NDE1 inhibits the interaction. Phosphorylated in mitosis. Phosphorylation at Thr-246 is essential for the G2/M transition. In terms of tissue distribution, expressed in brain, heart, kidney, liver, lung, skeletal muscle, spleen and testis.

It is found in the cytoplasm. The protein localises to the cytoskeleton. The protein resides in the microtubule organizing center. It localises to the centrosome. Its subcellular location is the spindle. It is found in the chromosome. The protein localises to the centromere. The protein resides in the kinetochore. It localises to the cleavage furrow. Its subcellular location is the cytoplasmic vesicle membrane. In terms of biological role, required for centrosome duplication and formation and function of the mitotic spindle. Essential for the development of the cerebral cortex. May regulate the production of neurons by controlling the orientation of the mitotic spindle during division of cortical neuronal progenitors of the proliferative ventricular zone of the brain. Orientation of the division plane perpendicular to the layers of the cortex gives rise to two proliferative neuronal progenitors whereas parallel orientation of the division plane yields one proliferative neuronal progenitor and a postmitotic neuron. A premature shift towards a neuronal fate within the progenitor population may result in an overall reduction in the final number of neurons and an increase in the number of neurons in the deeper layers of the cortex. Acts as a RAB9A/B effector that tethers RAB9-associated late endosomes to the dynein motor for their retrograde transport to the trans-Golgi network. The chain is Nuclear distribution protein nudE homolog 1 from Rattus norvegicus (Rat).